A 656-amino-acid polypeptide reads, in one-letter code: DNA ligase (656 aa).

Residues 32–36 (DEEYD), 81–82 (SM), and glutamate 112 contribute to the NAD(+) site. The active-site N6-AMP-lysine intermediate is lysine 114. Arginine 135, glutamate 169, lysine 284, and lysine 308 together coordinate NAD(+). 4 residues coordinate Zn(2+): cysteine 402, cysteine 405, cysteine 418, and cysteine 423. Residues 577 to 656 (VQKTPFTGKT…DMWKMLKEGK (80 aa)) enclose the BRCT domain.

This sequence belongs to the NAD-dependent DNA ligase family. LigA subfamily. It depends on Mg(2+) as a cofactor. Requires Mn(2+) as cofactor.

It carries out the reaction NAD(+) + (deoxyribonucleotide)n-3'-hydroxyl + 5'-phospho-(deoxyribonucleotide)m = (deoxyribonucleotide)n+m + AMP + beta-nicotinamide D-nucleotide.. In terms of biological role, DNA ligase that catalyzes the formation of phosphodiester linkages between 5'-phosphoryl and 3'-hydroxyl groups in double-stranded DNA using NAD as a coenzyme and as the energy source for the reaction. It is essential for DNA replication and repair of damaged DNA. This chain is DNA ligase, found in Nautilia profundicola (strain ATCC BAA-1463 / DSM 18972 / AmH).